A 359-amino-acid chain; its full sequence is Peptide chain release factor 1 (359 aa).

At glutamine 235 the chain carries N5-methylglutamine.

This sequence belongs to the prokaryotic/mitochondrial release factor family. In terms of processing, methylated by PrmC. Methylation increases the termination efficiency of RF1.

Its subcellular location is the cytoplasm. In terms of biological role, peptide chain release factor 1 directs the termination of translation in response to the peptide chain termination codons UAG and UAA. The sequence is that of Peptide chain release factor 1 from Nitrosomonas europaea (strain ATCC 19718 / CIP 103999 / KCTC 2705 / NBRC 14298).